We begin with the raw amino-acid sequence, 337 residues long: NADH-quinone oxidoreductase subunit H (337 aa).

Transmembrane regions (helical) follow at residues Ile-13–Leu-33, Ala-82–Ile-102, Val-115–Gly-135, Met-154–Ser-174, Gly-187–Ala-207, Ile-248–Ile-268, Ile-274–Val-294, and Val-313–Asp-333.

Belongs to the complex I subunit 1 family. NDH-1 is composed of 14 different subunits. Subunits NuoA, H, J, K, L, M, N constitute the membrane sector of the complex.

The protein localises to the cell inner membrane. The catalysed reaction is a quinone + NADH + 5 H(+)(in) = a quinol + NAD(+) + 4 H(+)(out). Functionally, NDH-1 shuttles electrons from NADH, via FMN and iron-sulfur (Fe-S) centers, to quinones in the respiratory chain. The immediate electron acceptor for the enzyme in this species is believed to be ubiquinone. Couples the redox reaction to proton translocation (for every two electrons transferred, four hydrogen ions are translocated across the cytoplasmic membrane), and thus conserves the redox energy in a proton gradient. This subunit may bind ubiquinone. The sequence is that of NADH-quinone oxidoreductase subunit H from Rhodospirillum rubrum (strain ATCC 11170 / ATH 1.1.1 / DSM 467 / LMG 4362 / NCIMB 8255 / S1).